The chain runs to 257 residues: Imidazole glycerol phosphate synthase subunit HisF (257 aa).

Catalysis depends on residues Asp11 and Asp130.

This sequence belongs to the HisA/HisF family. Heterodimer of HisH and HisF.

The protein resides in the cytoplasm. The catalysed reaction is 5-[(5-phospho-1-deoxy-D-ribulos-1-ylimino)methylamino]-1-(5-phospho-beta-D-ribosyl)imidazole-4-carboxamide + L-glutamine = D-erythro-1-(imidazol-4-yl)glycerol 3-phosphate + 5-amino-1-(5-phospho-beta-D-ribosyl)imidazole-4-carboxamide + L-glutamate + H(+). The protein operates within amino-acid biosynthesis; L-histidine biosynthesis; L-histidine from 5-phospho-alpha-D-ribose 1-diphosphate: step 5/9. IGPS catalyzes the conversion of PRFAR and glutamine to IGP, AICAR and glutamate. The HisF subunit catalyzes the cyclization activity that produces IGP and AICAR from PRFAR using the ammonia provided by the HisH subunit. The polypeptide is Imidazole glycerol phosphate synthase subunit HisF (Francisella philomiragia subsp. philomiragia (strain ATCC 25017 / CCUG 19701 / FSC 153 / O#319-036)).